Here is a 186-residue protein sequence, read N- to C-terminus: Orotate phosphoribosyltransferase (186 aa).

Residues Arg-93, Lys-94, Lys-97, His-99, and 119–127 (EDVTTTGGS) contribute to the 5-phospho-alpha-D-ribose 1-diphosphate site. Residues Thr-123 and Arg-151 each contribute to the orotate site.

It belongs to the purine/pyrimidine phosphoribosyltransferase family. PyrE subfamily. Homodimer. The cofactor is Mg(2+).

The catalysed reaction is orotidine 5'-phosphate + diphosphate = orotate + 5-phospho-alpha-D-ribose 1-diphosphate. It functions in the pathway pyrimidine metabolism; UMP biosynthesis via de novo pathway; UMP from orotate: step 1/2. Functionally, catalyzes the transfer of a ribosyl phosphate group from 5-phosphoribose 1-diphosphate to orotate, leading to the formation of orotidine monophosphate (OMP). The chain is Orotate phosphoribosyltransferase from Pyrococcus horikoshii (strain ATCC 700860 / DSM 12428 / JCM 9974 / NBRC 100139 / OT-3).